Consider the following 561-residue polypeptide: Sesquiterpene synthase TPS2 (561 aa).

The tract at residues 6–26 (ANGHSDVPSTQPPIGKQKKEI) is disordered. (2E,6E)-farnesyl diphosphate is bound by residues arginine 277, aspartate 314, aspartate 318, arginine 455, and aspartate 458. Mg(2+) is bound by residues aspartate 314 and aspartate 318. Positions 314–318 (DDTYD) match the DDXXD motif motif. Positions 458, 462, and 466 each coordinate Mg(2+).

Belongs to the terpene synthase family. Tpsa subfamily. Monomer. It depends on Mg(2+) as a cofactor.

The protein resides in the cytoplasm. The enzyme catalyses (2E,6E)-farnesyl diphosphate = beta-ylangene + diphosphate. The catalysed reaction is (2E,6E)-farnesyl diphosphate = beta-copaene + diphosphate. It catalyses the reaction (2E,6E)-farnesyl diphosphate = beta-cubebene + diphosphate. Its pathway is secondary metabolite biosynthesis; terpenoid biosynthesis. In terms of biological role, sesquiterpene synthase involved in the biosynthesis of volatile organic compounds. Mediates the conversion of (2E,6E)-farnesyl diphosphate (FPP) into beta-ylangene, beta-copaene and beta-cubebene. Does not use (2E)-geranyl diphosphate (GPP) as substrate. This Cananga odorata (Ylang-ylang tree) protein is Sesquiterpene synthase TPS2.